Here is a 584-residue protein sequence, read N- to C-terminus: Alkaline nuclease (584 aa).

The disordered stretch occupies residues 409 to 430 (GGGADHHLRGSPGDSPPPIPFE).

This sequence belongs to the herpesviridae alkaline nuclease family. Interacts with major DNA-binding protein; this interaction increases the nuclease processivity of the alkaline exonuclease.

The protein localises to the host nucleus. Its subcellular location is the host cytoplasm. Plays a role in processing non linear or branched viral DNA intermediates in order to promote the production of mature packaged unit-length linear progeny viral DNA molecules. Exhibits endonuclease and exonuclease activities and accepts both double-stranded and single-stranded DNA as substrate. Exonuclease digestion of DNA is in the 5'-&gt; 3' direction and the products are 5'-monophosphate nucleosides. Additionally, forms a recombinase with the major DNA-binding protein, which displays strand exchange activity. The sequence is that of Alkaline nuclease (UL98) from Human cytomegalovirus (strain AD169) (HHV-5).